Consider the following 203-residue polypeptide: Acireductone dioxygenase 3 (203 aa).

H96, H98, E102, and H141 together coordinate Fe(2+). Residues H96, H98, E102, and H141 each contribute to the Ni(2+) site.

It belongs to the acireductone dioxygenase (ARD) family. The cofactor is Fe(2+). It depends on Ni(2+) as a cofactor.

It localises to the cytoplasm. It is found in the nucleus. It carries out the reaction 1,2-dihydroxy-5-(methylsulfanyl)pent-1-en-3-one + O2 = 4-methylsulfanyl-2-oxobutanoate + formate + 2 H(+). The enzyme catalyses 1,2-dihydroxy-5-(methylsulfanyl)pent-1-en-3-one + O2 = 3-(methylsulfanyl)propanoate + CO + formate + 2 H(+). It functions in the pathway amino-acid biosynthesis; L-methionine biosynthesis via salvage pathway; L-methionine from S-methyl-5-thio-alpha-D-ribose 1-phosphate: step 5/6. Catalyzes 2 different reactions between oxygen and the acireductone 1,2-dihydroxy-3-keto-5-methylthiopentene (DHK-MTPene) depending upon the metal bound in the active site. Fe-containing acireductone dioxygenase (Fe-ARD) produces formate and 2-keto-4-methylthiobutyrate (KMTB), the alpha-ketoacid precursor of methionine in the methionine recycle pathway. Ni-containing acireductone dioxygenase (Ni-ARD) produces methylthiopropionate, carbon monoxide and formate, and does not lie on the methionine recycle pathway. In Physcomitrium patens (Spreading-leaved earth moss), this protein is Acireductone dioxygenase 3.